The sequence spans 65 residues: Large ribosomal subunit protein bL35c (65 aa).

Residues His25–Leu44 are compositionally biased toward basic residues. Residues His25–Ser45 form a disordered region.

It belongs to the bacterial ribosomal protein bL35 family.

It localises to the plastid. The protein localises to the chloroplast. In Pyropia yezoensis (Susabi-nori), this protein is Large ribosomal subunit protein bL35c.